Here is a 372-residue protein sequence, read N- to C-terminus: N-methyl-L-tryptophan oxidase (372 aa).

Residue 4–34 (DLIIIGSGSVGAAAGYYATRAGLKVLMTDAH) coordinates FAD. Residue Cys307 is modified to S-8alpha-FAD cysteine.

The protein belongs to the MSOX/MTOX family. MTOX subfamily. As to quaternary structure, monomer. It depends on FAD as a cofactor.

The catalysed reaction is N(alpha)-methyl-L-tryptophan + O2 + H2O = L-tryptophan + formaldehyde + H2O2. Catalyzes the oxidative demethylation of N-methyl-L-tryptophan. The chain is N-methyl-L-tryptophan oxidase from Salmonella typhi.